Reading from the N-terminus, the 105-residue chain is Synaptic plasticity regulator PANTS (105 aa).

This sequence belongs to the UPF0545 family. As to quaternary structure, interacts with RTN4 isoform A/Nogo-A; the interaction results in enhanced RTN4-mediated inhibition of AMPA receptor clustering. Also interacts with NCAM1, RANBP2 and CCT8. Post-translationally, rapidly degraded by proteolysis following neuronal stimulation, resulting in increased AMPA receptor clustering. In terms of tissue distribution, in the postnatal brain, expressed diffusely throughout the hippocampus at a low level at 8 weeks (at protein level). At 16 weeks, strongly expressed in the stratum lucidum of the hippocampus (at protein level). In developing and aging brain, expression is strongest in hippocampus, especially in areas CA3 and CA2, throughout the dorsoventral axis.

It is found in the synapse. The protein localises to the synaptic cleft. Functionally, negatively regulates long-term potentiation and modulates adult synaptic plasticity. Stabilizes the interaction of RTN4 isoform A/Nogo-A with its receptors, inhibiting clustering of postsynaptic AMPA receptors at synaptic sites. Upon neuronal stimulation, degraded at synapses, reducing RTN4 signaling and allowing AMPA receptor clustering at individual synapses. In Mus musculus (Mouse), this protein is Synaptic plasticity regulator PANTS.